Consider the following 216-residue polypeptide: ATP-dependent Clp protease proteolytic subunit (216 aa).

The active-site Nucleophile is the serine 120. Residue histidine 145 is part of the active site.

Belongs to the peptidase S14 family. As to quaternary structure, fourteen ClpP subunits assemble into 2 heptameric rings which stack back to back to give a disk-like structure with a central cavity, resembling the structure of eukaryotic proteasomes.

The protein localises to the cytoplasm. The catalysed reaction is Hydrolysis of proteins to small peptides in the presence of ATP and magnesium. alpha-casein is the usual test substrate. In the absence of ATP, only oligopeptides shorter than five residues are hydrolyzed (such as succinyl-Leu-Tyr-|-NHMec, and Leu-Tyr-Leu-|-Tyr-Trp, in which cleavage of the -Tyr-|-Leu- and -Tyr-|-Trp bonds also occurs).. Cleaves peptides in various proteins in a process that requires ATP hydrolysis. Has a chymotrypsin-like activity. Plays a major role in the degradation of misfolded proteins. This chain is ATP-dependent Clp protease proteolytic subunit, found in Cupriavidus necator (strain ATCC 17699 / DSM 428 / KCTC 22496 / NCIMB 10442 / H16 / Stanier 337) (Ralstonia eutropha).